Consider the following 314-residue polypeptide: MMGQNQTSISDFLLLGLPIQPEQQNLCYALFLAMYLTTLLGNLLIIVLIRLDSHLHTPMYLFLSNLSFSDLCFSSVTIPKLLQNMQNQDPSIPYADCLTQMYFFLLFGDLESFLLVAMAYDRYVAICFPLHYTAIMSPMLCLSLVALSWVLTTFHAMLHTLLMARLCFCADNVIPHFFCDMSALLKLACSDTRVNEWVIFIMGGLIVVIPFLLILGSYARIVSSILKVPSSKGICKAFSTCGSHLSVVSLFYGTIIGLYLCPSANSSTLKETVMAMMYTVVTPMLNPFIYSLRNRDMKGALERVICKRKNPFLL.

Residues 1–25 are Extracellular-facing; sequence MMGQNQTSISDFLLLGLPIQPEQQN. N-linked (GlcNAc...) asparagine glycosylation is present at asparagine 5. The chain crosses the membrane as a helical span at residues 26 to 49; the sequence is LCYALFLAMYLTTLLGNLLIIVLI. The Cytoplasmic portion of the chain corresponds to 50-57; that stretch reads RLDSHLHT. The helical transmembrane segment at 58-79 threads the bilayer; that stretch reads PMYLFLSNLSFSDLCFSSVTIP. The Extracellular portion of the chain corresponds to 80–100; it reads KLLQNMQNQDPSIPYADCLTQ. Cysteine 97 and cysteine 189 are oxidised to a cystine. A helical transmembrane segment spans residues 101 to 120; that stretch reads MYFFLLFGDLESFLLVAMAY. Residues 121–139 are Cytoplasmic-facing; it reads DRYVAICFPLHYTAIMSPM. The chain crosses the membrane as a helical span at residues 140-158; sequence LCLSLVALSWVLTTFHAML. The Extracellular portion of the chain corresponds to 159–195; that stretch reads HTLLMARLCFCADNVIPHFFCDMSALLKLACSDTRVN. The helical transmembrane segment at 196–219 threads the bilayer; sequence EWVIFIMGGLIVVIPFLLILGSYA. Residues 220–236 are Cytoplasmic-facing; the sequence is RIVSSILKVPSSKGICK. A helical membrane pass occupies residues 237 to 259; the sequence is AFSTCGSHLSVVSLFYGTIIGLY. Over 260–272 the chain is Extracellular; that stretch reads LCPSANSSTLKET. N-linked (GlcNAc...) asparagine glycosylation occurs at asparagine 265. Residues 273-292 traverse the membrane as a helical segment; it reads VMAMMYTVVTPMLNPFIYSL. The Cytoplasmic segment spans residues 293 to 314; sequence RNRDMKGALERVICKRKNPFLL.

Belongs to the G-protein coupled receptor 1 family.

Its subcellular location is the cell membrane. Its function is as follows. Odorant receptor. This Gorilla gorilla gorilla (Western lowland gorilla) protein is Olfactory receptor 1E2 (OR1E2).